We begin with the raw amino-acid sequence, 172 residues long: 18.6 kDa class III heat shock protein (172 aa).

Residues 29-54 are disordered; sequence RRSAGDHAHHAAHGHGQHRISGIGGG. Residues 48–172 enclose the sHSP domain; it reads ISGIGGGAPV…KTKSVQVTIA (125 aa).

Belongs to the small heat shock protein (HSP20) family. In terms of assembly, may form oligomeric structures.

The protein resides in the cytoplasm. This chain is 18.6 kDa class III heat shock protein (HSP18.6), found in Oryza sativa subsp. japonica (Rice).